We begin with the raw amino-acid sequence, 611 residues long: Dihydroxy-acid dehydratase (611 aa).

Aspartate 81 provides a ligand contact to Mg(2+). Residue cysteine 122 participates in [2Fe-2S] cluster binding. Positions 123 and 124 each coordinate Mg(2+). At lysine 124 the chain carries N6-carboxylysine. [2Fe-2S] cluster is bound at residue cysteine 195. Residue glutamate 491 participates in Mg(2+) binding. The active-site Proton acceptor is the serine 517.

The protein belongs to the IlvD/Edd family. Homodimer. Requires [2Fe-2S] cluster as cofactor. Mg(2+) serves as cofactor.

It catalyses the reaction (2R)-2,3-dihydroxy-3-methylbutanoate = 3-methyl-2-oxobutanoate + H2O. It carries out the reaction (2R,3R)-2,3-dihydroxy-3-methylpentanoate = (S)-3-methyl-2-oxopentanoate + H2O. The protein operates within amino-acid biosynthesis; L-isoleucine biosynthesis; L-isoleucine from 2-oxobutanoate: step 3/4. It participates in amino-acid biosynthesis; L-valine biosynthesis; L-valine from pyruvate: step 3/4. Its function is as follows. Functions in the biosynthesis of branched-chain amino acids. Catalyzes the dehydration of (2R,3R)-2,3-dihydroxy-3-methylpentanoate (2,3-dihydroxy-3-methylvalerate) into 2-oxo-3-methylpentanoate (2-oxo-3-methylvalerate) and of (2R)-2,3-dihydroxy-3-methylbutanoate (2,3-dihydroxyisovalerate) into 2-oxo-3-methylbutanoate (2-oxoisovalerate), the penultimate precursor to L-isoleucine and L-valine, respectively. This Histophilus somni (strain 2336) (Haemophilus somnus) protein is Dihydroxy-acid dehydratase.